The sequence spans 145 residues: D-aminoacyl-tRNA deacylase (145 aa).

A Gly-cisPro motif, important for rejection of L-amino acids motif is present at residues 137 to 138; that stretch reads GP.

It belongs to the DTD family. Homodimer.

It is found in the cytoplasm. The catalysed reaction is glycyl-tRNA(Ala) + H2O = tRNA(Ala) + glycine + H(+). It carries out the reaction a D-aminoacyl-tRNA + H2O = a tRNA + a D-alpha-amino acid + H(+). Its function is as follows. An aminoacyl-tRNA editing enzyme that deacylates mischarged D-aminoacyl-tRNAs. Also deacylates mischarged glycyl-tRNA(Ala), protecting cells against glycine mischarging by AlaRS. Acts via tRNA-based rather than protein-based catalysis; rejects L-amino acids rather than detecting D-amino acids in the active site. By recycling D-aminoacyl-tRNA to D-amino acids and free tRNA molecules, this enzyme counteracts the toxicity associated with the formation of D-aminoacyl-tRNA entities in vivo and helps enforce protein L-homochirality. This chain is D-aminoacyl-tRNA deacylase, found in Yersinia pestis bv. Antiqua (strain Antiqua).